A 396-amino-acid chain; its full sequence is Ribosomal RNA large subunit methyltransferase I (396 aa).

The PUA domain occupies 2–81 (SVRLVLAKGR…ESIDIAFFTR (80 aa)).

This sequence belongs to the methyltransferase superfamily. RlmI family.

The protein resides in the cytoplasm. It catalyses the reaction cytidine(1962) in 23S rRNA + S-adenosyl-L-methionine = 5-methylcytidine(1962) in 23S rRNA + S-adenosyl-L-homocysteine + H(+). Specifically methylates the cytosine at position 1962 (m5C1962) of 23S rRNA. The chain is Ribosomal RNA large subunit methyltransferase I from Escherichia coli (strain SMS-3-5 / SECEC).